The primary structure comprises 929 residues: Urea transporter 2 (929 aa).

Residues 1–11 (MSDHPLKEMSD) are compositionally biased toward basic and acidic residues. A disordered region spans residues 1 to 89 (MSDHPLKEMS…KRRESELPRR (89 aa)). Residues 31–42 (SELSSPTWPSSS) show a composition bias toward low complexity. Basic and acidic residues predominate over residues 55–88 (PEEKDLRSSDEDSHIVKIEKPNERSKRRESELPR). 9 consecutive transmembrane segments (helical) span residues 133-155 (GAAQVMFVNNPLSGLIIFIGLLI), 162-179 (IAGALGTVVSTLAALALS), 184-204 (AIASGLHGYNGMLVGLLVAVF), 212-232 (WWLLFPVTFASMACPVISSAL), 241-261 (LPVFTLPFNIALTLYLAATGH), 310-330 (GGVILVALFISSPLICLHAAI), 349-371 (IYTGLWSYNCVLSCVAIGGMFYV), 378-399 (LLALVCALFCAYTGAALSNMMA), and 400-420 (VVGVPPGTWAFCLSTLTFLLL). Residues 451–480 (SDEQKPPNGGGGEQSHGGGQRKAEEGSETV) are disordered. Positions 458-470 (NGGGGEQSHGGGQ) are enriched in gly residues. A Phosphoserine modification is found at S486. 4 helical membrane passes run 609-629 (GILIVLGLFVQNPWWAISGCL), 647-667 (AIAAGLHGYNGVLVGLLMAVF), 675-695 (WWLLLPVIVMSMTCPILSSAL), and 704-724 (LPVFTLPFNIAVTLYLAATGH). N-linked (GlcNAc...) asparagine glycosylation occurs at N742. 4 helical membrane passes run 773–793 (GGIFLVALFVSSPLICLHAAI), 812–832 (IYFGLCGFNSTLACIAIGGMF), 841–861 (LLAIACALFAAYLGAALANML), and 863–883 (VFGLPPCTWPFCLSALTFLLL).

The protein belongs to the urea transporter family. Interacts with SNAPIN which enhances its urea transport activity. Expressed in the inner medulla of the kidney. As to expression, expressed in both the inner and outer renal medulla of the kidney.

Its subcellular location is the apical cell membrane. It is found in the cell membrane. It catalyses the reaction urea(in) = urea(out). Inhibited by phloretin. Activated by vasopressin, forskolin, 3-isobutyl-1-methylxanthine (IBMX) and cAMP. Its activity is regulated as follows. Inhibited by phloretin. With respect to regulation, inhibited by urea analogs and phloretin and activated by forskolin. Inhibited by phloretin and activated by forskolin. Functionally, mediates the transport of urea driven by a concentration gradient across the cell membrane of the kidney inner medullary collecting duct which is critical to the urinary concentrating mechanism. The protein is Urea transporter 2 (Slc14a2) of Rattus norvegicus (Rat).